The following is a 160-amino-acid chain: Cyclic pyranopterin monophosphate synthase (160 aa).

Substrate is bound by residues 77 to 79 (LCH) and 114 to 115 (ME). D129 is an active-site residue.

This sequence belongs to the MoaC family. Homohexamer; trimer of dimers.

The catalysed reaction is (8S)-3',8-cyclo-7,8-dihydroguanosine 5'-triphosphate = cyclic pyranopterin phosphate + diphosphate. Its pathway is cofactor biosynthesis; molybdopterin biosynthesis. In terms of biological role, catalyzes the conversion of (8S)-3',8-cyclo-7,8-dihydroguanosine 5'-triphosphate to cyclic pyranopterin monophosphate (cPMP). The chain is Cyclic pyranopterin monophosphate synthase from Alcanivorax borkumensis (strain ATCC 700651 / DSM 11573 / NCIMB 13689 / SK2).